The sequence spans 84 residues: Large ribosomal subunit protein uL23 (84 aa).

This sequence belongs to the universal ribosomal protein uL23 family. As to quaternary structure, part of the 50S ribosomal subunit. Contacts protein L29.

Its function is as follows. Binds to 23S rRNA. One of the proteins that surrounds the polypeptide exit tunnel on the outside of the ribosome. The sequence is that of Large ribosomal subunit protein uL23 from Haloquadratum walsbyi (strain DSM 16790 / HBSQ001).